We begin with the raw amino-acid sequence, 135 residues long: P2Y purinoceptor 4 (135 aa).

A helical membrane pass occupies residues valine 1 to leucine 25. At methionine 26–threonine 49 the chain is on the cytoplasmic side. A helical membrane pass occupies residues isoleucine 50–tyrosine 72. At leucine 73 to valine 90 the chain is on the extracellular side. A helical membrane pass occupies residues tyrosine 91–threonine 112. Residues glycine 113 to alanine 135 lie on the Cytoplasmic side of the membrane.

This sequence belongs to the G-protein coupled receptor 1 family. Expressed in brain, heart, stria vascularis and vestibular labyrinth.

Its subcellular location is the cell membrane. Functionally, receptor for ATP and UTP coupled to G-proteins that activate a phosphatidylinositol-calcium second messenger system. Not activated by UDP. The protein is P2Y purinoceptor 4 (P2RY4) of Meriones unguiculatus (Mongolian jird).